A 371-amino-acid chain; its full sequence is Chaperone protein DnaJ (371 aa).

The J domain maps to 5–69; sequence DYYEVLGLSK…QKRAQYDQFG (65 aa). The segment at 133-215 adopts a CR-type zinc-finger fold; the sequence is GKELNVEIPV…CHGSGKVRKR (83 aa). Cys-146, Cys-149, Cys-163, Cys-166, Cys-189, Cys-192, Cys-203, and Cys-206 together coordinate Zn(2+). CXXCXGXG motif repeat units follow at residues 146 to 153, 163 to 170, 189 to 196, and 203 to 210; these read CDTCKGSG, CKHCSGSG, CSHCSGTG, and CTTCHGSG.

It belongs to the DnaJ family. Homodimer. Zn(2+) is required as a cofactor.

It is found in the cytoplasm. Functionally, participates actively in the response to hyperosmotic and heat shock by preventing the aggregation of stress-denatured proteins and by disaggregating proteins, also in an autonomous, DnaK-independent fashion. Unfolded proteins bind initially to DnaJ; upon interaction with the DnaJ-bound protein, DnaK hydrolyzes its bound ATP, resulting in the formation of a stable complex. GrpE releases ADP from DnaK; ATP binding to DnaK triggers the release of the substrate protein, thus completing the reaction cycle. Several rounds of ATP-dependent interactions between DnaJ, DnaK and GrpE are required for fully efficient folding. Also involved, together with DnaK and GrpE, in the DNA replication of plasmids through activation of initiation proteins. In Bacillus cereus (strain 03BB102), this protein is Chaperone protein DnaJ.